A 306-amino-acid polypeptide reads, in one-letter code: Serine/threonine-protein phosphatase PP2A-1 catalytic subunit (306 aa).

Mn(2+)-binding residues include D54, H56, D82, and N114. H115 (proton donor) is an active-site residue. Mn(2+) is bound by residues H164 and H238. A Leucine methyl ester modification is found at L306.

Belongs to the PPP phosphatase family. PP-2A subfamily. PP2A consists of a common heterodimeric core enzyme, composed of a 36 kDa catalytic subunit (subunit C) and a 65 kDa constant regulatory subunit (subunit A), that associates with a variety of regulatory subunits such as subunits B (the R2/B/PR55/B55, R3/B''/PR72/PR130/PR59 and R5/B'/B56 families). Interacts with TAF12B. Interacts with SRK2E/OST1. Interacts with TAP46. The cofactor is Mn(2+). Reversibly methyl esterified on Leu-306 by leucine carboxyl methyltransferase 1 (LCMT1) and pectin methylesterase 1 (PME1). Carboxyl methylation influences the affinity of the catalytic subunit for the different regulatory subunits, thereby modulating the PP2A holoenzyme's substrate specificity, enzyme activity and cellular localization. Post-translationally, phosphorylation of either threonine (by autophosphorylation-activated protein kinase) or tyrosine results in inactivation of the phosphatase. Auto-dephosphorylation has been suggested as a mechanism for reactivation.

It localises to the cytoplasm. It catalyses the reaction O-phospho-L-seryl-[protein] + H2O = L-seryl-[protein] + phosphate. The enzyme catalyses O-phospho-L-threonyl-[protein] + H2O = L-threonyl-[protein] + phosphate. The chain is Serine/threonine-protein phosphatase PP2A-1 catalytic subunit from Arabidopsis thaliana (Mouse-ear cress).